The primary structure comprises 127 residues: Fluoride-specific ion channel FluC (127 aa).

Helical transmembrane passes span 4–24 (SILA…FLGL), 36–56 (GTLL…AYFA), 68–88 (LIIT…AEVV), and 99–119 (AAGA…LGLF). The Na(+) site is built by Gly75 and Thr78.

This sequence belongs to the fluoride channel Fluc/FEX (TC 1.A.43) family.

The protein resides in the cell inner membrane. It carries out the reaction fluoride(in) = fluoride(out). With respect to regulation, na(+) is not transported, but it plays an essential structural role and its presence is essential for fluoride channel function. Its function is as follows. Fluoride-specific ion channel. Important for reducing fluoride concentration in the cell, thus reducing its toxicity. This is Fluoride-specific ion channel FluC from Pseudomonas aeruginosa (strain UCBPP-PA14).